Here is a 642-residue protein sequence, read N- to C-terminus: Extracellular metalloproteinase 5 (642 aa).

A signal peptide spans 1 to 19; the sequence is MHGLLLAAGLLSLPLHVLA. The propeptide occupies 20–246; sequence HPQPSTTTSL…VHNVVDYVAH (227 aa). Residue Asn-287 is glycosylated (N-linked (GlcNAc...) asparagine). His-430 contributes to the Zn(2+) binding site. Glu-431 is a catalytic residue. Residue His-434 participates in Zn(2+) binding. 2 N-linked (GlcNAc...) asparagine glycosylation sites follow: Asn-595 and Asn-624.

It belongs to the peptidase M36 family. Requires Zn(2+) as cofactor.

It localises to the secreted. Secreted metalloproteinase that allows assimilation of proteinaceous substrates and probably acts as a virulence factor. This is Extracellular metalloproteinase 5 (MEP5) from Arthroderma gypseum (strain ATCC MYA-4604 / CBS 118893) (Microsporum gypseum).